A 134-amino-acid chain; its full sequence is Small ribosomal subunit protein uS11 (134 aa).

Positions Met1–Val21 are disordered. Positions Ala9–Val21 are enriched in basic residues.

Belongs to the universal ribosomal protein uS11 family. Part of the 30S ribosomal subunit. Interacts with proteins S7 and S18. Binds to IF-3.

Located on the platform of the 30S subunit, it bridges several disparate RNA helices of the 16S rRNA. Forms part of the Shine-Dalgarno cleft in the 70S ribosome. The protein is Small ribosomal subunit protein uS11 of Thermobifida fusca (strain YX).